The following is an 87-amino-acid chain: Cell division topological specificity factor (87 aa).

This sequence belongs to the MinE family.

In terms of biological role, prevents the cell division inhibition by proteins MinC and MinD at internal division sites while permitting inhibition at polar sites. This ensures cell division at the proper site by restricting the formation of a division septum at the midpoint of the long axis of the cell. The polypeptide is Cell division topological specificity factor (Herpetosiphon aurantiacus (strain ATCC 23779 / DSM 785 / 114-95)).